A 356-amino-acid chain; its full sequence is GTPase Obg (356 aa).

Residues 1 to 159 (MKFLDEAKVY…RWIWLRMKLI (159 aa)) enclose the Obg domain. One can recognise an OBG-type G domain in the interval 160–327 (ADAGLVGLPN…ALRKLADVVG (168 aa)). Residues 166–173 (GLPNAGKS), 191–195 (FTTLH), 212–215 (DIPG), 279–282 (NKID), and 308–310 (SGA) contribute to the GTP site. Mg(2+) contacts are provided by Ser173 and Thr193. The segment at 327 to 356 (GEQPVSSKAKNAVESAATEEPWAAPVPPQG) is disordered.

Belongs to the TRAFAC class OBG-HflX-like GTPase superfamily. OBG GTPase family. Monomer. Mg(2+) serves as cofactor.

The protein resides in the cytoplasm. Its function is as follows. An essential GTPase which binds GTP, GDP and possibly (p)ppGpp with moderate affinity, with high nucleotide exchange rates and a fairly low GTP hydrolysis rate. Plays a role in control of the cell cycle, stress response, ribosome biogenesis and in those bacteria that undergo differentiation, in morphogenesis control. This is GTPase Obg from Bradyrhizobium sp. (strain ORS 278).